Consider the following 290-residue polypeptide: Taxis protein CheF1 (290 aa).

As to quaternary structure, interacts with chemotaxis (Che) proteins as well as flagella accessory (Fla) proteins.

Its function is as follows. Involved in taxis signal transduction. Essential for the ability to control the direction of flagellar rotation. May have a role between CheY and the flagellum. This Halobacterium salinarum (strain ATCC 29341 / DSM 671 / R1) protein is Taxis protein CheF1 (cheF1).